A 342-amino-acid polypeptide reads, in one-letter code: L-threonine 3-dehydrogenase (342 aa).

Cysteine 38 is a binding site for Zn(2+). Active-site charge relay system residues include threonine 40 and histidine 43. Zn(2+) is bound by residues histidine 63, glutamate 64, cysteine 93, cysteine 96, cysteine 99, and cysteine 107. NAD(+) is bound by residues isoleucine 175, aspartate 195, arginine 200, 262–264 (LGI), and 286–287 (IY).

The protein belongs to the zinc-containing alcohol dehydrogenase family. Homotetramer. Zn(2+) is required as a cofactor.

It localises to the cytoplasm. It catalyses the reaction L-threonine + NAD(+) = (2S)-2-amino-3-oxobutanoate + NADH + H(+). Its pathway is amino-acid degradation; L-threonine degradation via oxydo-reductase pathway; glycine from L-threonine: step 1/2. Its function is as follows. Catalyzes the NAD(+)-dependent oxidation of L-threonine to 2-amino-3-ketobutyrate. The chain is L-threonine 3-dehydrogenase from Paraburkholderia phymatum (strain DSM 17167 / CIP 108236 / LMG 21445 / STM815) (Burkholderia phymatum).